The following is a 728-amino-acid chain: Putative ankyrin repeat protein L271 (728 aa).

2 ANK repeats span residues 142 to 171 and 173 to 198; these read SDVN…NIKT and IYSA…DIIL. Residues 244–267 show a composition bias toward low complexity; sequence STKSTKSSGSPKSIKPKKSNQNNN. Positions 244 to 271 are disordered; that stretch reads STKSTKSSGSPKSIKPKKSNQNNNAKIN. Positions 292–338 form a coiled coil; that stretch reads TVDKMSSAKEQALNVYKEIENMENFILNKINITKKKALDKIKEIENI. ANK repeat units lie at residues 358–383, 384–414, 477–510, 514–543, 547–576, 594–626, 630–659, and 663–696; these read TNTD…RQGY, DINK…NYEQ, DDLS…NINS, IGRS…DYSF, NGDT…DTKT, DIKT…NVSS, TKKT…NINS, and LGKT…KILI.

The sequence is that of Putative ankyrin repeat protein L271 from Acanthamoeba polyphaga (Amoeba).